We begin with the raw amino-acid sequence, 98 residues long: Co-chaperonin GroES 5 (98 aa).

This sequence belongs to the GroES chaperonin family. As to quaternary structure, heptamer of 7 subunits arranged in a ring. Interacts with the chaperonin GroEL.

It localises to the cytoplasm. Its function is as follows. Together with the chaperonin GroEL, plays an essential role in assisting protein folding. The GroEL-GroES system forms a nano-cage that allows encapsulation of the non-native substrate proteins and provides a physical environment optimized to promote and accelerate protein folding. GroES binds to the apical surface of the GroEL ring, thereby capping the opening of the GroEL channel. The sequence is that of Co-chaperonin GroES 5 from Mesorhizobium japonicum (strain LMG 29417 / CECT 9101 / MAFF 303099) (Mesorhizobium loti (strain MAFF 303099)).